A 342-amino-acid chain; its full sequence is Anthranilate phosphoribosyltransferase (342 aa).

5-phospho-alpha-D-ribose 1-diphosphate-binding positions include glycine 84, 87–88 (GD), threonine 92, 94–97 (NIST), 112–120 (KHGGRSVSS), and serine 124. Glycine 84 is an anthranilate binding site. Serine 96 serves as a coordination point for Mg(2+). Arginine 170 lines the anthranilate pocket. Mg(2+) is bound by residues aspartate 229 and glutamate 230.

It belongs to the anthranilate phosphoribosyltransferase family. Homodimer. Requires Mg(2+) as cofactor.

The enzyme catalyses N-(5-phospho-beta-D-ribosyl)anthranilate + diphosphate = 5-phospho-alpha-D-ribose 1-diphosphate + anthranilate. It functions in the pathway amino-acid biosynthesis; L-tryptophan biosynthesis; L-tryptophan from chorismate: step 2/5. Catalyzes the transfer of the phosphoribosyl group of 5-phosphorylribose-1-pyrophosphate (PRPP) to anthranilate to yield N-(5'-phosphoribosyl)-anthranilate (PRA). In Verminephrobacter eiseniae (strain EF01-2), this protein is Anthranilate phosphoribosyltransferase.